A 296-amino-acid polypeptide reads, in one-letter code: NADPH-dependent 1-acyldihydroxyacetone phosphate reductase (296 aa).

NADP(+) is bound at residue Ile9. The GXSXG signature appears at 11 to 15 (GCSEG). NADP(+) contacts are provided by Thr35, Arg41, Asp56, Asn84, Lys117, Tyr148, Lys152, Val181, and Thr183. Catalysis depends on Tyr148, which acts as the Proton donor. Residue Lys152 is the Lowers pKa of active site Tyr of the active site.

It belongs to the short-chain dehydrogenases/reductases (SDR) family.

It is found in the lipid droplet. The protein resides in the cytoplasm. It localises to the vacuole. The protein localises to the endoplasmic reticulum. Its subcellular location is the golgi apparatus. It is found in the mitochondrion outer membrane. It carries out the reaction 1-hexadecanoyl-sn-glycero-3-phosphate + NADP(+) = 1-hexadecanoylglycerone 3-phosphate + NADPH + H(+). The enzyme catalyses a 1-acylglycerone 3-phosphate + NADPH + H(+) = a 1-acyl-sn-glycero-3-phosphate + NADP(+). It catalyses the reaction a triacylglycerol + H2O = a diacylglycerol + a fatty acid + H(+). Its function is as follows. Can convert acyl and alkyl dihydroxyacetone-phosphate (DHAP) into glycerolipids and ether lipids, respectively. Required for the biosynthesis of phosphatidic acid via the DHAP pathway, where it reduces 1-acyl DHAP to lysophosphatidic acid (LPA). Also has triacylglycerol (TAG) lipase activity. Involved in the mobilization of the non-polar storage lipids triacylglycerols (TAGs) from lipid particles by hydrolysis of TAGs. Lipolysis of TAG by AYR1 is essential for starvation-induced autophagy. Forms an NADPH-regulated cation-selective channel in the mitochondrial outer membrane. The chain is NADPH-dependent 1-acyldihydroxyacetone phosphate reductase (ayr1) from Schizosaccharomyces pombe (strain 972 / ATCC 24843) (Fission yeast).